Consider the following 610-residue polypeptide: tRNA uridine 5-carboxymethylaminomethyl modification enzyme MnmG (610 aa).

14 to 19 (GAGHAG) lines the FAD pocket. 274-288 (GPRYCPSIEDKIVKF) is an NAD(+) binding site.

The protein belongs to the MnmG family. Homodimer. Heterotetramer of two MnmE and two MnmG subunits. FAD is required as a cofactor.

The protein resides in the cytoplasm. Its function is as follows. NAD-binding protein involved in the addition of a carboxymethylaminomethyl (cmnm) group at the wobble position (U34) of certain tRNAs, forming tRNA-cmnm(5)s(2)U34. The polypeptide is tRNA uridine 5-carboxymethylaminomethyl modification enzyme MnmG (Chlamydia trachomatis serovar D (strain ATCC VR-885 / DSM 19411 / UW-3/Cx)).